The following is a 400-amino-acid chain: MGRAKKVVLAYSGGVDTSVCIPYLKHEWGVESVVALAVDLGQGAELEAIQAKALRAGAEQSLVREAVQALITDYAFPAIQANALYEQRYPLSTALARPLIAKLLVEVAEEVGADAVAHGCTGKGNDQVRFDLAIAALNPQLKVLAPAREWGMTREETIAYGERYGIPMPVQKSSPYSIDLNILGRSAEAGILEDADREPPEEVYALTRPISQTPDEPAYVEIEFEQGIPVGLDGQRLGPKALFEQLNSLAGLHGVGRIDMIENRLVGIKSREIYECPALMVLIQAHRELESLTLTRDVIHYKYGIETTYSQLIYNGLWYSPLREALDAFIRATQKSVTGVVRMRLHKGQAVCVGRRSPYSLYNPELATYGEGDQFDHRAAEGFIYIWGLPTRVWAQVHRG.

ATP is bound at residue 10–18 (AYSGGVDTS). Tyrosine 89 is an L-citrulline binding site. An ATP-binding site is contributed by glycine 119. Residues threonine 121, asparagine 125, and aspartate 126 each coordinate L-aspartate. Asparagine 125 is an L-citrulline binding site. Residues arginine 129, serine 177, serine 186, glutamate 262, and tyrosine 274 each contribute to the L-citrulline site.

It belongs to the argininosuccinate synthase family. Type 1 subfamily. Homotetramer.

It is found in the cytoplasm. The catalysed reaction is L-citrulline + L-aspartate + ATP = 2-(N(omega)-L-arginino)succinate + AMP + diphosphate + H(+). It functions in the pathway amino-acid biosynthesis; L-arginine biosynthesis; L-arginine from L-ornithine and carbamoyl phosphate: step 2/3. The protein is Argininosuccinate synthase of Synechococcus sp. (strain JA-2-3B'a(2-13)) (Cyanobacteria bacterium Yellowstone B-Prime).